An 860-amino-acid polypeptide reads, in one-letter code: Transforming growth factor-beta receptor-associated protein 1 (860 aa).

The CNH domain maps to 24 to 297; it reads RVNIECVECC…HILQDFEGRV (274 aa). A CHCR repeat occupies 564-728; it reads RPLDEQQKNS…LLAIYLHAGP (165 aa).

This sequence belongs to the TRAP1 family. In terms of assembly, interacts with TGFBR2 and ACVR2B; in the absence of ligand stimulation. Interacts with TGFBR1, ACVRL1, BMPR1A and ACVR1B; in the absence of ligand stimulation and to a less extent. Interacts with SMAD4; the interaction seems to be mutually exclusive with the interaction of SMAD4 and phosphorylated SMAD2. May interact with ALOX5. Interacts with RAB5C. Interacts with VPS8, VPS11 and VPS16. Component of the putative class C core vacuole/endosome tethering (CORVET) complex; the core of which composed of the class C Vps proteins VPS11, VPS16, VPS18 and VPS33A, is associated with VPS8 and TGFBRAP1.

The protein resides in the cytoplasm. The protein localises to the early endosome. Plays a role in the TGF-beta/activin signaling pathway. It associates with inactive heteromeric TGF-beta and activin receptor complexes, mainly through the type II receptor, and is released upon activation of signaling. May recruit SMAD4 to the vicinity of the receptor complex and facilitate its interaction with receptor-regulated Smads, such as SMAD2. Functionally, plays a role in vesicle-mediated protein trafficking of the endocytic membrane transport pathway. Believed to act as a component of the putative CORVET endosomal tethering complexes which is proposed to be involved in the Rab5-to-Rab7 endosome conversion probably implicating MON1A/B, and via binding SNAREs and SNARE complexes to mediate tethering and docking events during SNARE-mediated membrane fusion. The CORVET complex is proposed to function as a Rab5 effector to mediate early endosome fusion probably in specific endosome subpopulations. Functions predominantly in APPL1-containing endosomes and in degradative but not recycling trafficking of endocytosed cargo. This Homo sapiens (Human) protein is Transforming growth factor-beta receptor-associated protein 1 (TGFBRAP1).